The chain runs to 524 residues: Solute carrier family 35 member F5 (524 aa).

Positions 1–22 are disordered; sequence MVPPRHHPGAGRPGALSSSPPF. A compositionally biased stretch (low complexity) spans 13-22; sequence PGALSSSPPF. 2 helical membrane passes run 69-89 and 101-121; these read MALGIVILLLVDVIWVASSEL and FFSTFAKTSMFVLYLLGFIVW. The residue at position 207 (Ser-207) is a Phosphoserine. Transmembrane regions (helical) follow at residues 244-264, 269-289, 297-317, 328-348, 362-382, 396-416, 421-441, and 453-473; these read ISFFFCFVWFLANFSYQEALS, AIVNILSSTSGLFTLILAAMF, FTLSKLLAVILSIGGVVLVNL, TIGSIWSLVGAMLYAVYIVMI, MFFGFVGLFNLLLLWPGFFLL, VVLMCIVINGLIGTVLSEFLW, FLTSSLIGTLALSLTIPLSII, and WLFFAGAIPVFFSFFIATLLC. The EamA domain occupies 253–317; that stretch reads FLANFSYQEA…SIGGVVLVNL (65 aa).

The protein belongs to the SLC35F solute transporter family.

Its subcellular location is the membrane. Putative solute transporter. The polypeptide is Solute carrier family 35 member F5 (SLC35F5) (Bos taurus (Bovine)).